The chain runs to 71 residues: Small ribosomal subunit protein bS21 (71 aa).

A compositionally biased stretch (basic residues) spans 48 to 59; it reads EKASLAKRHAKR. Positions 48–71 are disordered; it reads EKASLAKRHAKRNFRENARNTRLY. Basic and acidic residues predominate over residues 60 to 71; the sequence is NFRENARNTRLY.

It belongs to the bacterial ribosomal protein bS21 family.

The chain is Small ribosomal subunit protein bS21 from Glaesserella parasuis serovar 5 (strain SH0165) (Haemophilus parasuis).